The following is a 461-amino-acid chain: Ornithine decarboxylase (461 aa).

Lys69 is subject to N6-(pyridoxal phosphate)lysine. Residues Ser200, Gly237, and 274-277 (EPGR) contribute to the pyridoxal 5'-phosphate site. Ser303 carries the post-translational modification Phosphoserine; by CK2. 331–332 (YD) contributes to the substrate binding site. Residue Cys360 is the Proton donor; shared with dimeric partner of the active site. Position 360 is an S-nitrosocysteine (Cys360). Asp361 lines the substrate pocket. Residue Tyr389 participates in pyridoxal 5'-phosphate binding.

The protein belongs to the Orn/Lys/Arg decarboxylase class-II family. As to quaternary structure, homodimer. Only the dimer is catalytically active, as the active sites are constructed of residues from both monomers. Does not form a heterodimer with AZIN2. Pyridoxal 5'-phosphate is required as a cofactor. Expressed during testis development in the outer part of the seminiferous tubules.

The enzyme catalyses L-ornithine + H(+) = putrescine + CO2. Its pathway is amine and polyamine biosynthesis; putrescine biosynthesis via L-ornithine pathway; putrescine from L-ornithine: step 1/1. Inhibited by antizymes (AZs) OAZ1, OAZ2 and OAZ3 in response to polyamine levels. AZs inhibit the assembly of the functional homodimer by binding to ODC monomers. Additionally, OAZ1 targets ODC monomers for ubiquitin-independent proteolytic destruction by the 26S proteasome. Catalyzes the first and rate-limiting step of polyamine biosynthesis that converts ornithine into putrescine, which is the precursor for the polyamines, spermidine and spermine. Polyamines are essential for cell proliferation and are implicated in cellular processes, ranging from DNA replication to apoptosis. This chain is Ornithine decarboxylase (Odc1), found in Mus musculus (Mouse).